A 297-amino-acid polypeptide reads, in one-letter code: Transcription factor MYB1R1 (297 aa).

Positions 44–96 (DLSQYEHPNANNNNNGGDNNESSKVAQDEGYASADDAVQHQSNSGRERKRGVP) are disordered. The segment covering 52–63 (NANNNNNGGDNN) has biased composition (low complexity). An HTH myb-type domain is found at 89-145 (RERKRGVPWTEEEHKLFLLGLQKVGKGDWRGISRNFVKTRTPTQVASHAQKYFLRRS). Positions 117–141 (WRGISRNFVKTRTPTQVASHAQKYF) form a DNA-binding region, H-T-H motif.

Its subcellular location is the nucleus. It is found in the cytoplasm. The protein localises to the cytosol. Functionally, binds selectively to the DNA sequence 5'-[GA]GATAA-3' and may act as a transcription factor involved in the regulation of drought-responsive genes. Enhances stomatal closure in response to abscisic acid (ABA). Confers drought and salt tolerance. This chain is Transcription factor MYB1R1, found in Solanum tuberosum (Potato).